The sequence spans 278 residues: Large ribosomal subunit protein uL2 (278 aa).

Disordered stretches follow at residues methionine 1–aspartate 20 and valine 225–arginine 278. Residues arginine 258–arginine 278 show a composition bias toward basic residues.

This sequence belongs to the universal ribosomal protein uL2 family. As to quaternary structure, part of the 50S ribosomal subunit. Forms a bridge to the 30S subunit in the 70S ribosome.

Its function is as follows. One of the primary rRNA binding proteins. Required for association of the 30S and 50S subunits to form the 70S ribosome, for tRNA binding and peptide bond formation. It has been suggested to have peptidyltransferase activity; this is somewhat controversial. Makes several contacts with the 16S rRNA in the 70S ribosome. The polypeptide is Large ribosomal subunit protein uL2 (Cutibacterium acnes (strain DSM 16379 / KPA171202) (Propionibacterium acnes)).